The sequence spans 156 residues: Transcriptional repressor NrdR (156 aa).

A zinc finger spans residues 3 to 34 (CPFCQHGHSRVIDSRVIEAGSAIRRRRECSQC). The ATP-cone domain occupies 46-136 (LLVLKRNGVT…VYKSFESADD (91 aa)).

This sequence belongs to the NrdR family. The cofactor is Zn(2+).

Functionally, negatively regulates transcription of bacterial ribonucleotide reductase nrd genes and operons by binding to NrdR-boxes. In Corynebacterium efficiens (strain DSM 44549 / YS-314 / AJ 12310 / JCM 11189 / NBRC 100395), this protein is Transcriptional repressor NrdR.